The following is a 110-amino-acid chain: Prothymosin alpha (110 aa).

At Met-1 the chain carries N-acetylmethionine. The disordered stretch occupies residues 1–110 (MSDAAVDTSS…TKKQKTDEDD (110 aa)). Ser-2 bears the N-acetylserine; in Prothymosin alpha, N-terminally processed mark. Ser-2 carries the phosphoserine modification. A Phosphothreonine modification is found at Thr-8. A phosphoserine mark is found at Ser-9 and Ser-10. Phosphothreonine occurs at positions 13 and 14. Positions 13–31 (TTKDLKEKKEVVEEAENGR) are enriched in basic and acidic residues. Lys-15 bears the N6-acetyllysine; alternate mark. Lys-15 bears the N6-succinyllysine; alternate mark. Over residues 42-83 (ENGEQEADNEVDEEEEEGGEEEEEEEEGDGEEEDGDEDEEAE) the composition is skewed to acidic residues. A compositionally biased stretch (basic and acidic residues) spans 100 to 110 (DTKKQKTDEDD). Thr-101 bears the Phosphothreonine mark. Lys-102 is subject to N6-acetyllysine; alternate. Residue Lys-102 forms a Glycyl lysine isopeptide (Lys-Gly) (interchain with G-Cter in SUMO2); alternate linkage. The residue at position 106 (Thr-106) is a Phosphothreonine.

This sequence belongs to the pro/parathymosin family. Interacts with NUPR1; regulates apoptotic process. In terms of processing, covalently linked to a small RNA of about 20 nucleotides.

The protein resides in the nucleus. Its function is as follows. Prothymosin alpha may mediate immune function by conferring resistance to certain opportunistic infections. In Pongo abelii (Sumatran orangutan), this protein is Prothymosin alpha (PTMA).